Reading from the N-terminus, the 273-residue chain is Kit ligand (273 aa).

The first 25 residues, 1–25 (MKKTQTWIITCIYLQLLLFNPLVKT), serve as a signal peptide directing secretion. Pyrrolidone carboxylic acid is present on Q26. Residues 26–214 (QEICRNPVTD…AKSPEDPGLQ (189 aa)) lie on the Extracellular side of the membrane. Cystine bridges form between C29-C114 and C68-C163. N90 carries N-linked (GlcNAc...) asparagine; partial glycosylation. N-linked (GlcNAc...) asparagine glycosylation is present at N145. O-linked (GalNAc...) serine glycosylation occurs at S167. 2 O-linked (GalNAc...) threonine glycosylation sites follow: T168 and T180. Residues 190 to 211 (ASSLRNDSSSSNRKAAKSPEDP) form a disordered region. The span at 191–202 (SSLRNDSSSSNR) shows a compositional bias: low complexity. The N-linked (GlcNAc...) asparagine glycan is linked to N195. The chain crosses the membrane as a helical span at residues 215–237 (WTAMALPALISLVIGFAFGALYW). Topologically, residues 238 to 273 (KKKQSSLTRAVENIQINEEDNEISMLQQKEREFQEV) are cytoplasmic.

Belongs to the SCF family. In terms of assembly, homodimer, non-covalently linked. Heterotetramer with KIT, binding two KIT molecules; thereby mediates KIT dimerization and subsequent activation by autophosphorylation. In terms of processing, a soluble form is produced by proteolytic processing of isoform 1 in the extracellular domain. Post-translationally, the identity of N- and O-linked saccharides is not reported in PubMed:1708771. The O-linked polysaccharides are probably the mucin type linked to GalNAc.

Its subcellular location is the cell membrane. It is found in the cytoplasm. The protein localises to the cytoskeleton. It localises to the cell projection. The protein resides in the lamellipodium. Its subcellular location is the filopodium. It is found in the secreted. Its function is as follows. Ligand for the receptor-type protein-tyrosine kinase KIT. Plays an essential role in the regulation of cell survival and proliferation, hematopoiesis, stem cell maintenance, gametogenesis, mast cell development, migration and function, and in melanogenesis. KITLG/SCF binding can activate several signaling pathways. Promotes phosphorylation of PIK3R1, the regulatory subunit of phosphatidylinositol 3-kinase, and subsequent activation of the kinase AKT1. KITLG/SCF and KIT also transmit signals via GRB2 and activation of RAS, RAF1 and the MAP kinases MAPK1/ERK2 and/or MAPK3/ERK1. KITLG/SCF and KIT promote activation of STAT family members STAT1, STAT3 and STAT5. KITLG/SCF and KIT promote activation of PLCG1, leading to the production of the cellular signaling molecules diacylglycerol and inositol 1,4,5-trisphosphate. KITLG/SCF acts synergistically with other cytokines, probably interleukins. This is Kit ligand (Kitlg) from Rattus norvegicus (Rat).